A 257-amino-acid chain; its full sequence is Melatonin receptor type 1A (257 aa).

Over 5–22 (LASIVNDGWSLSSLHCQL) the chain is Extracellular. Cys-20 and Cys-97 are joined by a disulfide. The helical transmembrane segment at 23-43 (SGFLMGLSVIGSVFNITGIAI) threads the bilayer. The Cytoplasmic portion of the chain corresponds to 44–64 (NRYCCICHSLRYNKLYSSTNS). Residues 65 to 85 (LCYVFLIWMLTLVAIVPNLCV) traverse the membrane as a helical segment. Over 86-107 (GTLQYDPRIYSCTFTQSVSSAY) the chain is Extracellular. The chain crosses the membrane as a helical span at residues 108 to 128 (TIAVVVFHFIVPMLVVIFCYL). Over 129–160 (RIWALVLQVRWRVKPDNKPKLKPQDFRNFVTM) the chain is Cytoplasmic. The chain crosses the membrane as a helical span at residues 161 to 181 (FVVFVLFAICWAPLNFIGLVV). Over 182 to 194 (ASEPASMAPRIPE) the chain is Extracellular. A helical transmembrane segment spans residues 195 to 215 (WLFVASYYMGYFNSCLNAIIY). Over 216–257 (GLLNQNFRQEYRKIIVSLCTTKMFFVDSSNHVAHRIKRKPSP) the chain is Cytoplasmic.

It belongs to the G-protein coupled receptor 1 family.

The protein localises to the cell membrane. In terms of biological role, high affinity receptor for melatonin. Likely to mediate the reproductive and circadian actions of melatonin. The activity of this receptor is mediated by pertussis toxin sensitive G proteins that inhibit adenylate cyclase activity. Possibly involved in sleep induction, by melatonin activation of the potassium channel KCNMA1/BK and the dissociation of G-beta and G-gamma subunits, thereby decreasing synaptic transmission. The chain is Melatonin receptor type 1A (MTNR1A) from Bos taurus (Bovine).